Here is a 325-residue protein sequence, read N- to C-terminus: Beta-ketoacyl-[acyl-carrier-protein] synthase III (325 aa).

Residues C119 and H252 contribute to the active site. Residues 253–257 form an ACP-binding region; sequence QANIR. The active site involves N282.

This sequence belongs to the thiolase-like superfamily. FabH family. In terms of assembly, homodimer.

Its subcellular location is the cytoplasm. The catalysed reaction is malonyl-[ACP] + acetyl-CoA + H(+) = 3-oxobutanoyl-[ACP] + CO2 + CoA. It functions in the pathway lipid metabolism; fatty acid biosynthesis. In terms of biological role, catalyzes the condensation reaction of fatty acid synthesis by the addition to an acyl acceptor of two carbons from malonyl-ACP. Catalyzes the first condensation reaction which initiates fatty acid synthesis and may therefore play a role in governing the total rate of fatty acid production. Possesses both acetoacetyl-ACP synthase and acetyl transacylase activities. Its substrate specificity determines the biosynthesis of branched-chain and/or straight-chain of fatty acids. The sequence is that of Beta-ketoacyl-[acyl-carrier-protein] synthase III from Verminephrobacter eiseniae (strain EF01-2).